The chain runs to 104 residues: Large ribosomal subunit protein uL24 (104 aa).

The protein belongs to the universal ribosomal protein uL24 family. Part of the 50S ribosomal subunit.

Its function is as follows. One of two assembly initiator proteins, it binds directly to the 5'-end of the 23S rRNA, where it nucleates assembly of the 50S subunit. Functionally, one of the proteins that surrounds the polypeptide exit tunnel on the outside of the subunit. In Sodalis glossinidius (strain morsitans), this protein is Large ribosomal subunit protein uL24.